Reading from the N-terminus, the 270-residue chain is Glutamate racemase (270 aa).

Substrate contacts are provided by residues 7-8 and 39-40; these read DS and YG. Catalysis depends on Cys70, which acts as the Proton donor/acceptor. A substrate-binding site is contributed by 71-72; sequence NT. The Proton donor/acceptor role is filled by Cys194. Residue 195 to 196 participates in substrate binding; that stretch reads TH.

This sequence belongs to the aspartate/glutamate racemases family.

The enzyme catalyses L-glutamate = D-glutamate. The protein operates within cell wall biogenesis; peptidoglycan biosynthesis. In terms of biological role, provides the (R)-glutamate required for cell wall biosynthesis. In Paracoccus denitrificans (strain Pd 1222), this protein is Glutamate racemase.